The primary structure comprises 898 residues: DNA damage-induced apoptosis suppressor protein (898 aa).

Disordered regions lie at residues 191 to 210, 643 to 670, and 710 to 749; these read CGSQ…DSDL, SINT…HEGS, and YPIN…FEES. Composition is skewed to polar residues over residues 643–664 and 710–725; these read SINT…PSSS and YPIN…KPSL. The span at 726 to 741 shows a compositional bias: low complexity; the sequence is QSISPSRYSRPRSQSD.

In terms of tissue distribution, highly expressed in the testis, spleen and heart. Expressed at high levels in the primary spermatocytes and to a lesser extent in the round spermatids. Also found in the bone marrow, brain, lung, kidney and liver.

Its subcellular location is the cytoplasm. It is found in the nucleus. In terms of biological role, may be an anti-apoptotic protein involved in DNA repair or cell survival. This chain is DNA damage-induced apoptosis suppressor protein (Ddias), found in Mus musculus (Mouse).